Here is a 125-residue protein sequence, read N- to C-terminus: S-adenosylmethionine decarboxylase proenzyme (125 aa).

Ser-63 acts as the Schiff-base intermediate with substrate; via pyruvic acid in catalysis. A Pyruvic acid (Ser); by autocatalysis modification is found at Ser-63. His-68 functions as the Proton acceptor; for processing activity in the catalytic mechanism. Cys-83 serves as the catalytic Proton donor; for catalytic activity.

It belongs to the prokaryotic AdoMetDC family. Type 1 subfamily. Heterotetramer of two alpha and two beta chains arranged as a dimer of alpha/beta heterodimers. The cofactor is pyruvate. Is synthesized initially as an inactive proenzyme. Formation of the active enzyme involves a self-maturation process in which the active site pyruvoyl group is generated from an internal serine residue via an autocatalytic post-translational modification. Two non-identical subunits are generated from the proenzyme in this reaction, and the pyruvate is formed at the N-terminus of the alpha chain, which is derived from the carboxyl end of the proenzyme. The post-translation cleavage follows an unusual pathway, termed non-hydrolytic serinolysis, in which the side chain hydroxyl group of the serine supplies its oxygen atom to form the C-terminus of the beta chain, while the remainder of the serine residue undergoes an oxidative deamination to produce ammonia and the pyruvoyl group blocking the N-terminus of the alpha chain.

It catalyses the reaction S-adenosyl-L-methionine + H(+) = S-adenosyl 3-(methylsulfanyl)propylamine + CO2. The protein operates within amine and polyamine biosynthesis; S-adenosylmethioninamine biosynthesis; S-adenosylmethioninamine from S-adenosyl-L-methionine: step 1/1. Its function is as follows. Catalyzes the decarboxylation of S-adenosylmethionine to S-adenosylmethioninamine (dcAdoMet), the propylamine donor required for the synthesis of the polyamines spermine and spermidine from the diamine putrescine. This Moorella thermoacetica (strain ATCC 39073 / JCM 9320) protein is S-adenosylmethionine decarboxylase proenzyme.